The primary structure comprises 98 residues: NADH-ubiquinone oxidoreductase chain 4L (98 aa).

Helical transmembrane passes span 2–22 (PSIS…MLMF), 29–49 (SLLC…LTIL), and 61–81 (ILLL…LVMV).

It belongs to the complex I subunit 4L family. Core subunit of respiratory chain NADH dehydrogenase (Complex I) which is composed of 45 different subunits.

It localises to the mitochondrion inner membrane. It carries out the reaction a ubiquinone + NADH + 5 H(+)(in) = a ubiquinol + NAD(+) + 4 H(+)(out). In terms of biological role, core subunit of the mitochondrial membrane respiratory chain NADH dehydrogenase (Complex I) which catalyzes electron transfer from NADH through the respiratory chain, using ubiquinone as an electron acceptor. Part of the enzyme membrane arm which is embedded in the lipid bilayer and involved in proton translocation. In Microcebus mittermeieri (Mittermeier's mouse lemur), this protein is NADH-ubiquinone oxidoreductase chain 4L (MT-ND4L).